The chain runs to 747 residues: Superkiller protein 7 (747 aa).

Positions 14 to 51 (KSKGLLSADQSHSTSKSASLLERLHKNRETKDNNAETK) are disordered. Positions 21 to 31 (ADQSHSTSKSA) are enriched in polar residues. The segment covering 35–51 (ERLHKNRETKDNNAETK) has biased composition (basic and acidic residues). 2 positions are modified to phosphoserine: Ser-88 and Ser-90. The interval 89–117 (NSDLEKQGKSVTLDSKENELPTKRKSPDD) is disordered. In terms of domain architecture, tr-type G spans 265–503 (PLNLTCLFLG…YVPEWYEGPT (239 aa)). Positions 274 to 281 (GDTNAGKS) are G1. Position 274-281 (274-281 (GDTNAGKS)) interacts with GTP. The G2 stretch occupies residues 331 to 335 (GFSMF). The interval 356 to 359 (DTPG) is G3. GTP contacts are provided by residues 356-360 (DTPGS) and 427-430 (NKAD). The interval 427 to 430 (NKAD) is G4. The tract at residues 467-469 (SGL) is G5.

The protein belongs to the TRAFAC class translation factor GTPase superfamily. Classic translation factor GTPase family. Interacts with the exosome and with the SKI complex composed of at least SKI2, SKI3 and SKI8. Interacts directly with SKI3 and SKI8.

The protein resides in the cytoplasm. In terms of biological role, represses the expression of non-poly(A) mRNAs like L-A or M viruses and is therefore involved in antiviral system. Mediates interactions via its N-terminus between the exosome and the SKI complex which operate in the 3'-to-5' mRNA-decay pathway. By interacting with NAM7, is also required for nonsense-mediated 3'-to-5' mRNA-decay (NMD). May recognize a stalled 80S ribosome at the 3'-end of a nonstop mRNA which leads to the recruitment of the exosome and SKI complexes to the mRNAs to be degraded. In Saccharomyces cerevisiae (strain ATCC 204508 / S288c) (Baker's yeast), this protein is Superkiller protein 7 (SKI7).